Here is a 298-residue protein sequence, read N- to C-terminus: NAD kinase (298 aa).

Asp80 acts as the Proton acceptor in catalysis. NAD(+)-binding positions include 80–81, 154–155, Arg182, Asp184, 195–200, Ala219, and Gln253; these read DG, ND, and TAYALS.

It belongs to the NAD kinase family. A divalent metal cation serves as cofactor.

The protein localises to the cytoplasm. It carries out the reaction NAD(+) + ATP = ADP + NADP(+) + H(+). In terms of biological role, involved in the regulation of the intracellular balance of NAD and NADP, and is a key enzyme in the biosynthesis of NADP. Catalyzes specifically the phosphorylation on 2'-hydroxyl of the adenosine moiety of NAD to yield NADP. This Delftia acidovorans (strain DSM 14801 / SPH-1) protein is NAD kinase.